We begin with the raw amino-acid sequence, 580 residues long: MSFHVEGLVAIILFYLLIFLVGIWAAWKTKNSGNPEERSEAIIVGGRDIGLLVGGFTMTATWVGGGYINGTAEAVYGPGCGLAWAQAPIGYSLSLILGGLFFAKPMRSKGYVTMLDPFQQIYGKRMGGLLFIPALMGEMFWAAAIFSALGATISVIIDVDVNISVIVSALIAILYTLVGGLYSVAYTDVVQLFCIFIGLWISVPFALSHPAVTDIGFTAVHAKYQSPWLGTIESVEVYTWLDNFLLLMLGGIPWQAYFQRVLSSSSATYAQVLSFLAAFGCLVMALPAICIGAIGASTDWNQTAYGYPDPKTKEEADMILPIVLQYLCPVYISFFGLGAVSAAVMSSADSSILSASSMFARNIYQLSFRQNASDKEIVWVMRITVLVFGASATAMALLTKTVYGLWYLSSDLVYIIIFPQLLCVLFIKGTNTYGAVAGYIFGLFLRITGGEPYLYLQPLIFYPGYYSDKNGIYNQRFPFKTLSMVTSFFTNICVSYLAKYLFESGTLPPKLDVFDAVVARHSEENMDKTILVRNENIKLNELAPVKPRQSLTLSSTFTNKEALLDVDSSPEGSGTEDNLQ.

The Extracellular segment spans residues 1–6 (MSFHVE). A helical membrane pass occupies residues 7–27 (GLVAIILFYLLIFLVGIWAAW). Topologically, residues 28–48 (KTKNSGNPEERSEAIIVGGRD) are cytoplasmic. A helical membrane pass occupies residues 49–69 (IGLLVGGFTMTATWVGGGYIN). Over 70–81 (GTAEAVYGPGCG) the chain is Extracellular. Residues 82–102 (LAWAQAPIGYSLSLILGGLFF) traverse the membrane as a helical segment. Residues 103–125 (AKPMRSKGYVTMLDPFQQIYGKR) lie on the Cytoplasmic side of the membrane. Residues 126–146 (MGGLLFIPALMGEMFWAAAIF) form a helical membrane-spanning segment. The Extracellular segment spans residues 147–164 (SALGATISVIIDVDVNIS). The chain crosses the membrane as a helical span at residues 165–185 (VIVSALIAILYTLVGGLYSVA). The Cytoplasmic segment spans residues 186–191 (YTDVVQ). A helical membrane pass occupies residues 192-212 (LFCIFIGLWISVPFALSHPAV). Topologically, residues 213-237 (TDIGFTAVHAKYQSPWLGTIESVEV) are extracellular. Residues 238–258 (YTWLDNFLLLMLGGIPWQAYF) traverse the membrane as a helical segment. Over 259-274 (QRVLSSSSATYAQVLS) the chain is Cytoplasmic. The chain crosses the membrane as a helical span at residues 275–295 (FLAAFGCLVMALPAICIGAIG). The Extracellular segment spans residues 296-317 (ASTDWNQTAYGYPDPKTKEEAD). N-linked (GlcNAc...) asparagine glycosylation occurs at N301. Residues 318–338 (MILPIVLQYLCPVYISFFGLG) traverse the membrane as a helical segment. Residues 339 to 376 (AVSAAVMSSADSSILSASSMFARNIYQLSFRQNASDKE) are Cytoplasmic-facing. A helical membrane pass occupies residues 377–397 (IVWVMRITVLVFGASATAMAL). Topologically, residues 398–406 (LTKTVYGLW) are extracellular. A helical membrane pass occupies residues 407–427 (YLSSDLVYIIIFPQLLCVLFI). Over 428–435 (KGTNTYGA) the chain is Cytoplasmic. A helical membrane pass occupies residues 436 to 456 (VAGYIFGLFLRITGGEPYLYL). Residues 457–481 (QPLIFYPGYYSDKNGIYNQRFPFKT) are Extracellular-facing. Residues 482 to 502 (LSMVTSFFTNICVSYLAKYLF) traverse the membrane as a helical segment. Positions 502 to 580 (FESGTLPPKL…EGSGTEDNLQ (79 aa)) are mediates interaction with SEC14L1. Over 503-580 (ESGTLPPKLD…EGSGTEDNLQ (78 aa)) the chain is Cytoplasmic. The short motif at 527–532 (DKTILV) is the Dileucine-like motif element.

This sequence belongs to the sodium:solute symporter (SSF) (TC 2.A.21) family. In terms of assembly, homooligomerizes at cell surface. Interacts with SEC14L1; may regulate SLC5A7. In terms of processing, phosphorylated by PKC and dephosphorylated by PP1/PP2A. Found in spinal cord, brain-stem, mid-brain and striatum. Specific for cholinergic neurons.

Its subcellular location is the presynaptic cell membrane. The protein localises to the cell projection. It is found in the axon. It localises to the early endosome membrane. The protein resides in the cytoplasmic vesicle. Its subcellular location is the secretory vesicle. The protein localises to the synaptic vesicle membrane. The enzyme catalyses choline(out) + n Na(+)(out) = choline(in) + n Na(+)(in). Choline uptake activity is regulated by SLC5A7/CHT1 internalization (inactive form) from the cell surface and recycling of internalized SLC5A7/CHT1 into the cell surface (active form). Activated by extracellular chloride ion. Specifically inhibited by nanomolar concentrations of hemicholinium 3. High-affinity Na(+)-coupled choline transmembrane symporter. Functions as an electrogenic, voltage-dependent transporter with variable charge/choline stoichiometry. Choline uptake and choline-induced current is also Cl(-)-dependent where Cl(-) is likely a regulatory ion rather than cotransported ion. Plays a critical role in acetylcholine (ACh) synthesis by taking up the substrate choline from the synaptic cleft into the presynaptic nerve terminals after neurotransmitter release. SLC5A7/CHT1-mediated choline high-affinity transport in cholinergic neurons is the rate-limiting step for production of ACh, thereby facilitating communication by subsequent action potentials. Localized predominantly in presynaptic terminal intracellular organelles, and translocated to the plasma membrane in active form in response to neuronal activity. This chain is High affinity choline transporter 1, found in Mus musculus (Mouse).